The chain runs to 458 residues: Cysteine--tRNA ligase (458 aa).

Zn(2+) is bound at residue cysteine 33. A 'HIGH' region motif is present at residues 35–45 (PTVYDFAHIGN). Cysteine 221, histidine 246, and glutamate 250 together coordinate Zn(2+). The 'KMSKS' region motif lies at 279–283 (KMSKS). Lysine 282 serves as a coordination point for ATP.

The protein belongs to the class-I aminoacyl-tRNA synthetase family. In terms of assembly, monomer. Requires Zn(2+) as cofactor.

The protein localises to the cytoplasm. The enzyme catalyses tRNA(Cys) + L-cysteine + ATP = L-cysteinyl-tRNA(Cys) + AMP + diphosphate. The chain is Cysteine--tRNA ligase from Rhizobium etli (strain ATCC 51251 / DSM 11541 / JCM 21823 / NBRC 15573 / CFN 42).